The following is a 230-amino-acid chain: Large ribosomal subunit protein uL1 (230 aa).

Belongs to the universal ribosomal protein uL1 family. In terms of assembly, part of the 50S ribosomal subunit.

In terms of biological role, binds directly to 23S rRNA. The L1 stalk is quite mobile in the ribosome, and is involved in E site tRNA release. Its function is as follows. Protein L1 is also a translational repressor protein, it controls the translation of the L11 operon by binding to its mRNA. In Aster yellows witches'-broom phytoplasma (strain AYWB), this protein is Large ribosomal subunit protein uL1.